We begin with the raw amino-acid sequence, 651 residues long: DNA mismatch repair protein MutL (651 aa).

The interval 383–405 is disordered; the sequence is TAAEEPTPAPTSPDLEIGDLDDQ.

It belongs to the DNA mismatch repair MutL/HexB family.

Its function is as follows. This protein is involved in the repair of mismatches in DNA. It is required for dam-dependent methyl-directed DNA mismatch repair. May act as a 'molecular matchmaker', a protein that promotes the formation of a stable complex between two or more DNA-binding proteins in an ATP-dependent manner without itself being part of a final effector complex. The chain is DNA mismatch repair protein MutL from Lacticaseibacillus paracasei (strain ATCC 334 / BCRC 17002 / CCUG 31169 / CIP 107868 / KCTC 3260 / NRRL B-441) (Lactobacillus paracasei).